The sequence spans 361 residues: MSPECAQTTGPGPSRTPDQVNRTHFPFFSDVKGDHRLVLSVLETTVLGLIFVVSLLGNVCALVLVVRRRRRGATVSLVLNLFCADLLFTSAIPLVLVVRWTEAWLLGPVVCHLLFYVMTMSGSVTILTLAAVSLERMVCIVRLRRGLSGPGRRTQAALLAFIWGYSALAALPLCILFRVVPQRLPGGDQEIPICTLDWPNRIGEISWDVFFVTLNFLVPGLVIVISYSKILQITKASRKRLTLSLAYSESHQIRVSQQDYRLFRTLFLLMVSFFIMWSPIIITILLILIQNFRQDLVIWPSLFFWVVAFTFANSALNPILYNMSLFRSEWRKIFCCFFFPEKGAIFTETSIRRNDLSVIST.

The interval 1-21 (MSPECAQTTGPGPSRTPDQVN) is disordered. Residues 1-45 (MSPECAQTTGPGPSRTPDQVNRTHFPFFSDVKGDHRLVLSVLETT) are Extracellular-facing. A glycan (N-linked (GlcNAc...) asparagine) is linked at asparagine 21. The helical transmembrane segment at 46 to 66 (VLGLIFVVSLLGNVCALVLVV) threads the bilayer. Residues 67 to 77 (RRRRRGATVSL) are Cytoplasmic-facing. Residues 78-98 (VLNLFCADLLFTSAIPLVLVV) form a helical membrane-spanning segment. Residues 99–103 (RWTEA) lie on the Extracellular side of the membrane. Residues 104–124 (WLLGPVVCHLLFYVMTMSGSV) traverse the membrane as a helical segment. A disulfide bridge links cysteine 111 with cysteine 194. The Cytoplasmic segment spans residues 125–156 (TILTLAAVSLERMVCIVRLRRGLSGPGRRTQA). The helical transmembrane segment at 157-177 (ALLAFIWGYSALAALPLCILF) threads the bilayer. The Extracellular segment spans residues 178-204 (RVVPQRLPGGDQEIPICTLDWPNRIGE). A helical transmembrane segment spans residues 205-225 (ISWDVFFVTLNFLVPGLVIVI). The Cytoplasmic portion of the chain corresponds to 226 to 268 (SYSKILQITKASRKRLTLSLAYSESHQIRVSQQDYRLFRTLFL). The helical transmembrane segment at 269-289 (LMVSFFIMWSPIIITILLILI) threads the bilayer. Topologically, residues 290 to 295 (QNFRQD) are extracellular. A helical membrane pass occupies residues 296-316 (LVIWPSLFFWVVAFTFANSAL). Over 317 to 361 (NPILYNMSLFRSEWRKIFCCFFFPEKGAIFTETSIRRNDLSVIST) the chain is Cytoplasmic. Phosphothreonine is present on residues threonine 347 and threonine 349. Residues serine 350, serine 357, and serine 360 each carry the phosphoserine modification.

The protein belongs to the G-protein coupled receptor 1 family. Interacts (via C-terminus) with ARRB2 following LCFAs stimulation. In terms of processing, phosphorylated at two clusters of Ser and Thr residues located in the intracellular C-terminus. Prerequisite for FFAR4 internalization via an ARRB2-dependent pathway.

It localises to the cell membrane. The protein localises to the endosome membrane. Its subcellular location is the lysosome membrane. It is found in the cell projection. The protein resides in the cilium membrane. In terms of biological role, G-protein-coupled receptor for long-chain fatty acids (LCFAs) with a major role in adipogenesis, energy metabolism and inflammation. Signals via G-protein and beta-arrestin pathways. LCFAs sensing initiates activation of phosphoinositidase C-linked G proteins GNAQ and GNA11 (G(q)/G(11)), inducing a variety of cellular responses via second messenger pathways such as intracellular calcium mobilization, modulation of cyclic adenosine monophosphate (cAMP) production, and mitogen-activated protein kinases (MAPKs). After LCFAs binding, associates with beta-arrestin ARRB2 that acts as an adapter protein coupling the receptor to specific downstream signaling pathways, as well as mediating receptor endocytosis. In response to dietary fats, plays an important role in the regulation of adipocyte proliferation and differentiation. Acts as a receptor for omega-3 polyunsaturated fatty acids (PUFAs) at primary cilium of perivascular preadipocytes, initiating an adipogenic program via cAMP and CTCF-dependent chromatin remodeling that ultimately results in transcriptional activation of adipogenic genes and cell cycle entry. Induces differentiation of brown and beige adipocytes probably via autocrine and endocrine functions of FGF21 hormone. Contributes to the thermogenic activation of brown adipose tissue and the browning of white adipose tissue. Activates brown adipocytes by initiating intracellular calcium signaling leading to mitochondrial depolarization and fission, and overall increased mitochondrial respiration. Consequently stimulates fatty acid uptake and oxidation in mitochondria together with UCP1-mediated thermogenic respiration, eventually reducing fat mass. Regulates bi-potential differentiation of bone marrow mesenchymal stem cells toward osteoblasts or adipocytes likely by up-regulating distinct integrins. In response to dietary fats regulates hormone secretion and appetite. Stimulates GIP and GLP1 secretion from enteroendocrine cells as well as GCG secretion in pancreatic alpha cells, thereby playing a role in the regulation of blood glucose levels. Negatively regulates glucose-induced SST secretion in pancreatic delta cells. Mediates LCFAs inhibition of GHRL secretion, an appetite-controlling hormone. In taste buds, contributes to sensing of dietary fatty acids by the gustatory system. During the inflammatory response, promotes anti-inflammatory M2 macrophage differentiation in adipose tissue. Mediates the anti-inflammatory effects of omega-3 PUFAs via inhibition of NLRP3 inflammasome activation. In this pathway, interacts with adapter protein ARRB2 and inhibits the priming step triggered by Toll-like receptors (TLRs) at the level of TAK1 and TAB1. Further inhibits the activation step when ARRB2 directly associates with NLRP3, leading to inhibition of pro-inflammatory cytokine release. Mediates LCFAs anti-apoptotic effects. The polypeptide is Free fatty acid receptor 4 (Ffar4) (Rattus norvegicus (Rat)).